Here is a 440-residue protein sequence, read N- to C-terminus: tRNA(Ile)-lysidine synthase (440 aa).

29 to 34 (SGGLDS) serves as a coordination point for ATP.

The protein belongs to the tRNA(Ile)-lysidine synthase family.

The protein localises to the cytoplasm. The catalysed reaction is cytidine(34) in tRNA(Ile2) + L-lysine + ATP = lysidine(34) in tRNA(Ile2) + AMP + diphosphate + H(+). Ligates lysine onto the cytidine present at position 34 of the AUA codon-specific tRNA(Ile) that contains the anticodon CAU, in an ATP-dependent manner. Cytidine is converted to lysidine, thus changing the amino acid specificity of the tRNA from methionine to isoleucine. This is tRNA(Ile)-lysidine synthase from Pectobacterium atrosepticum (strain SCRI 1043 / ATCC BAA-672) (Erwinia carotovora subsp. atroseptica).